Consider the following 958-residue polypeptide: Eukaryotic translation initiation factor 3 subunit A (958 aa).

A coiled-coil region spans residues 93 to 123 (MHLATERAELARNQAQALEEALDVEDLEADK). One can recognise a PCI domain in the interval 316–513 (LQLIASSVVL…GLSSLVNRVL (198 aa)). 2 coiled-coil regions span residues 548–696 (EALS…AKRE) and 796–861 (LRSE…LRKS). Over residues 804-859 (KRLQEEEEARKREEAERRKKEEAERQAKLDEIAEKQRRRMLELEEKEKREREEILR) the composition is skewed to basic and acidic residues. The tract at residues 804–958 (KRLQEEEEAR…SRTSWPASRR (155 aa)) is disordered. Positions 877-894 (PAELGGAAPIPAAAATAP) are enriched in low complexity. The segment covering 929–942 (KPDDRPSWRDERKP) has biased composition (basic and acidic residues). Residues 946 to 958 (GSGSRTSWPASRR) show a composition bias toward polar residues.

The protein belongs to the eIF-3 subunit A family. In terms of assembly, component of the eukaryotic translation initiation factor 3 (eIF-3) complex.

The protein localises to the cytoplasm. Its function is as follows. RNA-binding component of the eukaryotic translation initiation factor 3 (eIF-3) complex, which is involved in protein synthesis of a specialized repertoire of mRNAs and, together with other initiation factors, stimulates binding of mRNA and methionyl-tRNAi to the 40S ribosome. The eIF-3 complex specifically targets and initiates translation of a subset of mRNAs involved in cell proliferation. The polypeptide is Eukaryotic translation initiation factor 3 subunit A (TIF3A1) (Nicotiana tabacum (Common tobacco)).